Here is a 129-residue protein sequence, read N- to C-terminus: Phosphoribosyl-AMP cyclohydrolase (129 aa).

Aspartate 82 lines the Mg(2+) pocket. Zn(2+) is bound at residue cysteine 83. Residues aspartate 84 and aspartate 86 each coordinate Mg(2+). Positions 99 and 106 each coordinate Zn(2+).

Belongs to the PRA-CH family. In terms of assembly, homodimer. Mg(2+) serves as cofactor. It depends on Zn(2+) as a cofactor.

The protein resides in the cytoplasm. It carries out the reaction 1-(5-phospho-beta-D-ribosyl)-5'-AMP + H2O = 1-(5-phospho-beta-D-ribosyl)-5-[(5-phospho-beta-D-ribosylamino)methylideneamino]imidazole-4-carboxamide. It functions in the pathway amino-acid biosynthesis; L-histidine biosynthesis; L-histidine from 5-phospho-alpha-D-ribose 1-diphosphate: step 3/9. In terms of biological role, catalyzes the hydrolysis of the adenine ring of phosphoribosyl-AMP. The polypeptide is Phosphoribosyl-AMP cyclohydrolase (Methanosarcina barkeri (strain Fusaro / DSM 804)).